We begin with the raw amino-acid sequence, 358 residues long: Popeye domain-containing protein 1 (358 aa).

Over methionine 1 to alanine 48 the chain is Extracellular. Residues asparagine 2 and asparagine 30 are each glycosylated (N-linked (GlcNAc...) asparagine). Residues asparagine 49 to leucine 69 traverse the membrane as a helical segment. Residue arginine 70 is a topological domain, cytoplasmic. Residues valine 71–leucine 91 form a helical membrane-spanning segment. Residue aspartate 92 is a topological domain, extracellular. Residues valine 93–tyrosine 113 form a helical membrane-spanning segment. The tract at residues valine 93–lysine 115 is required for interaction with CAV3. The Cytoplasmic portion of the chain corresponds to lysine 114 to proline 358. Residues arginine 136–arginine 186 are required for interaction with KCNK2. Residues serine 295 and serine 318 each carry the phosphoserine modification. The segment covering serine 313–serine 323 has biased composition (low complexity). Positions serine 313–aspartate 350 are disordered.

This sequence belongs to the popeye family. As to quaternary structure, homodimer. Homodimerization requires the C-terminus cytoplasmic region. Interacts (via the C-terminus cytoplasmic tail) with TJP1. Interacts (via the C-terminus cytoplasmic tail) with ARHGEF25/GEFT (via the DH domain). Interacts (via the C-terminus cytoplasmic tail) with VAMP3. Interacts with KCNK2; the interaction enhances KCNK2 surface expression and is inhibited by cAMP. Interacts with CAV3. As to expression, expressed in epithelial cells, skeletal muscle, heart and intestinal smooth muscle (at protein level). Expressed in fetal and adult heart and skeletal muscle.

The protein localises to the lateral cell membrane. The protein resides in the cell junction. Its subcellular location is the tight junction. It localises to the membrane. It is found in the cell membrane. The protein localises to the sarcolemma. The protein resides in the caveola. Its function is as follows. Cell adhesion molecule involved in the establishment and/or maintenance of cell integrity. Involved in the formation and regulation of the tight junction (TJ) paracellular permeability barrier in epithelial cells. Plays a role in VAMP3-mediated vesicular transport and recycling of different receptor molecules through its interaction with VAMP3. Plays a role in the regulation of cell shape and movement by modulating the Rho-family GTPase activity through its interaction with ARHGEF25/GEFT. Induces primordial adhesive contact and aggregation of epithelial cells in a Ca(2+)-independent manner. Also involved in striated muscle regeneration and repair and in the regulation of cell spreading. Important for the maintenance of cardiac function. Plays a regulatory function in heart rate dynamics mediated, at least in part, through cAMP-binding and, probably, by increasing cell surface expression of the potassium channel KCNK2 and enhancing current density. Is a caveolae-associated protein important for the preservation of caveolae structural and functional integrity as well as for heart protection against ischemia injury. This Mus musculus (Mouse) protein is Popeye domain-containing protein 1.